Consider the following 118-residue polypeptide: Large ribosomal subunit protein uL22 (118 aa).

This sequence belongs to the universal ribosomal protein uL22 family. As to quaternary structure, part of the 50S ribosomal subunit.

In terms of biological role, this protein binds specifically to 23S rRNA; its binding is stimulated by other ribosomal proteins, e.g. L4, L17, and L20. It is important during the early stages of 50S assembly. It makes multiple contacts with different domains of the 23S rRNA in the assembled 50S subunit and ribosome. Its function is as follows. The globular domain of the protein is located near the polypeptide exit tunnel on the outside of the subunit, while an extended beta-hairpin is found that lines the wall of the exit tunnel in the center of the 70S ribosome. The protein is Large ribosomal subunit protein uL22 of Prosthecochloris aestuarii (strain DSM 271 / SK 413).